A 367-amino-acid polypeptide reads, in one-letter code: Ferrochelatase (367 aa).

Fe cation is bound by residues H226 and E307.

This sequence belongs to the ferrochelatase family.

Its subcellular location is the cytoplasm. It carries out the reaction heme b + 2 H(+) = protoporphyrin IX + Fe(2+). Its pathway is porphyrin-containing compound metabolism; protoheme biosynthesis; protoheme from protoporphyrin-IX: step 1/1. Its function is as follows. Catalyzes the ferrous insertion into protoporphyrin IX. This is Ferrochelatase from Burkholderia mallei (strain NCTC 10247).